The chain runs to 354 residues: Adenine deaminase (354 aa).

His19, His21, and His211 together coordinate Zn(2+). The active-site Proton donor is the Glu214. Asp291 is a binding site for Zn(2+). Asp292 contacts substrate.

Belongs to the metallo-dependent hydrolases superfamily. Adenosine and AMP deaminases family. Adenine deaminase type 2 subfamily. Zn(2+) serves as cofactor.

Its subcellular location is the cytoplasm. It is found in the nucleus. The catalysed reaction is adenine + H2O + H(+) = hypoxanthine + NH4(+). In terms of biological role, catalyzes the hydrolytic deamination of adenine to hypoxanthine. Plays an important role in the purine salvage pathway and in nitrogen catabolism. The protein is Adenine deaminase (aah1) of Aspergillus fumigatus (strain ATCC MYA-4609 / CBS 101355 / FGSC A1100 / Af293) (Neosartorya fumigata).